The following is a 519-amino-acid chain: 3-octaprenyl-4-hydroxybenzoate carboxy-lyase (519 aa).

Position 177 (asparagine 177) interacts with Mn(2+). Prenylated FMN-binding positions include 180-182, 194-196, and 199-200; these read IYR, RWL, and RG. Glutamate 243 serves as a coordination point for Mn(2+). The active-site Proton donor is aspartate 318.

Belongs to the UbiD family. As to quaternary structure, homohexamer. Requires prenylated FMN as cofactor. It depends on Mn(2+) as a cofactor.

It is found in the cell membrane. It catalyses the reaction a 4-hydroxy-3-(all-trans-polyprenyl)benzoate + H(+) = a 2-(all-trans-polyprenyl)phenol + CO2. It participates in cofactor biosynthesis; ubiquinone biosynthesis. Catalyzes the decarboxylation of 3-octaprenyl-4-hydroxy benzoate to 2-octaprenylphenol, an intermediate step in ubiquinone biosynthesis. The polypeptide is 3-octaprenyl-4-hydroxybenzoate carboxy-lyase (Burkholderia mallei (strain ATCC 23344)).